Reading from the N-terminus, the 131-residue chain is Large ribosomal subunit protein bL17 (131 aa).

Belongs to the bacterial ribosomal protein bL17 family. As to quaternary structure, part of the 50S ribosomal subunit. Contacts protein L32.

This Bordetella parapertussis (strain 12822 / ATCC BAA-587 / NCTC 13253) protein is Large ribosomal subunit protein bL17.